A 169-amino-acid chain; its full sequence is X polypeptide (169 aa).

This sequence belongs to the IagB/IpgF/P19 family.

The polypeptide is X polypeptide (yubQ) (Escherichia coli (strain K12)).